The sequence spans 286 residues: MDPVPSTQTQKWPGKHADLDPEPSLLRYCDGRVHVGSGKLAEKKTLLTGGDSGIGKAAAVMFAREGSDLVISCLPEERDDAEVTRDLIEREGRNCWIWEGKLDKSDNCRDLVDFALKKLGWIDVLVNNIAYQQVAQSIEDIDDEQWDLTFKTNIFSFFWVTKAAISHMKSGSSIVNCSSINAYVGRPDLLDYTSTKGAITAFTRGLSNQYAQHGIRVNAVAPGPIYTPLVSSTFPKEKIELSDQVPLGRMGQPVEVASCYLFLACSDGGYMTGQTLHPNGGTVINN.

NADP(+)-binding residues include I54, N128, and K162. Residue S178 is the Proton donor of the active site. Residues Y192, K196, I225, and T227 each coordinate NADP(+). Y192 (proton acceptor) is an active-site residue. The active-site Lowers pKa of active site Tyr is the K196.

It belongs to the short-chain dehydrogenases/reductases (SDR) family.

This is an uncharacterized protein from Schizosaccharomyces pombe (strain 972 / ATCC 24843) (Fission yeast).